Consider the following 177-residue polypeptide: GTP-dependent dephospho-CoA kinase (177 aa).

GTP-binding residues include D45, V46, V47, D64, and E120.

Belongs to the GTP-dependent DPCK family.

It carries out the reaction 3'-dephospho-CoA + GTP = GDP + CoA + H(+). It functions in the pathway cofactor biosynthesis; coenzyme A biosynthesis. Its function is as follows. Catalyzes the GTP-dependent phosphorylation of the 3'-hydroxyl group of dephosphocoenzyme A to form coenzyme A (CoA). The polypeptide is GTP-dependent dephospho-CoA kinase (Halobacterium salinarum (strain ATCC 29341 / DSM 671 / R1)).